Consider the following 496-residue polypeptide: MEASRQVRVRYAPSPTGRLHVGGVRTALFNWLFARKHGGVFILRIEDTDLERSTEESVEQLKRSLRWIGLDWDEGPDVGGPHAPYRQTERLELYRRAARRLLESGAAYYDFATPEELTRFRQRARAEGRPPIYTGGPYREMDPEEALRRVRMGEPHTVRFKTPREGRTVFEDIIRGPVGFENATIEDFVLLKSTGTPTYNFAAAVDDAEMQITHVIRGDDHISNTPRQIMIHRALGHELPAFAHVPQVLGPDRKKLSKRHGAASVEDFAEQGILPEALFNYLALLGAGYAADEEIFAPEELAERFRLEKVSGNPAIFDEQKLLAINAVYIRRKSPEELAMLAAPMLSERGVADAGELERDMPRLVRIMELLRERLQRTTDIPEAAGYFYGERLDYDREQFEKQFGKEFVRENLPELYRRLKALPEWTADAIESCVRGLAAEKEKGARHLIHPLRFATTGRTVSAGLFETMELIGRERCLLRIADVLERLQSPERSL.

The 'HIGH' region signature appears at 13 to 23; sequence PSPTGRLHVGG. The short motif at 255–259 is the 'KMSKS' region element; the sequence is KLSKR. An ATP-binding site is contributed by lysine 258.

The protein belongs to the class-I aminoacyl-tRNA synthetase family. Glutamate--tRNA ligase type 1 subfamily. In terms of assembly, monomer.

The protein resides in the cytoplasm. The enzyme catalyses tRNA(Glu) + L-glutamate + ATP = L-glutamyl-tRNA(Glu) + AMP + diphosphate. Functionally, catalyzes the attachment of glutamate to tRNA(Glu) in a two-step reaction: glutamate is first activated by ATP to form Glu-AMP and then transferred to the acceptor end of tRNA(Glu). The protein is Glutamate--tRNA ligase 2 of Rubrobacter xylanophilus (strain DSM 9941 / JCM 11954 / NBRC 16129 / PRD-1).